The sequence spans 233 residues: Small ribosomal subunit protein uS3 (233 aa).

A KH type-2 domain is found at 39–107 (VRQFLMKTLE…PVQINISEVR (69 aa)).

Belongs to the universal ribosomal protein uS3 family. In terms of assembly, part of the 30S ribosomal subunit. Forms a tight complex with proteins S10 and S14.

Its function is as follows. Binds the lower part of the 30S subunit head. Binds mRNA in the 70S ribosome, positioning it for translation. The sequence is that of Small ribosomal subunit protein uS3 from Buchnera aphidicola subsp. Acyrthosiphon pisum (strain APS) (Acyrthosiphon pisum symbiotic bacterium).